A 387-amino-acid chain; its full sequence is MATTKSFLILIVMILATTSSTFASLEEMVTVLSIDGGGVKGIIPGTILEFLEGQLQKMDNNADARLADYFDVIGGTSTGGLLTAMITTPNENNRPFAAANEIVPFYFEHGPHIFNSSTGQFFGPKYDGKYLMQVLQEKLGETRVHQALTEVAISSFDIKTNKPVIFTKSNLAKSPELDAKMYDICYSTAAAPTYFPPHYFATNTINGDKYEFNLVDGAVATVADPALLSVSVATRRAQEDPAFASIRSLNYKKMLLLSLGTGTTSEFDKTHTAEETAKWGALQWMLVIQQMTEAASSYMTDYYLSTVFQDLHSQNNYLRVQENALTGTTTKADDASEANMELLAQVGENLLKKPVSKDNPETYEEALKRFAKLLSDRKKLRANKASY.

Residues 1–23 form the signal peptide; the sequence is MATTKSFLILIVMILATTSSTFA. The 199-residue stretch at 32 to 230 folds into the PNPLA domain; the sequence is LSIDGGGVKG…TVADPALLSV (199 aa). A GXGXXG motif is present at residues 36–41; it reads GGGVKG. The short motif at 75-79 is the GXSXG element; that stretch reads GTSTG. The Nucleophile role is filled by Ser-77. An N-linked (GlcNAc...) asparagine glycan is attached at Asn-115. The Proton acceptor role is filled by Asp-216. The DGA/G signature appears at 216 to 218; the sequence is DGA. Residues 361–385 adopt a coiled-coil conformation; the sequence is ETYEEALKRFAKLLSDRKKLRANKA.

The protein belongs to the patatin family. As to expression, tuber and stolon.

Its subcellular location is the vacuole. Probable lipolytic acyl hydrolase (LAH), an activity which is thought to be involved in the response of tubers to pathogens. This Solanum tuberosum (Potato) protein is Patatin group A-3.